The following is a 312-amino-acid chain: DNA-directed RNA polymerase subunit alpha (312 aa).

Positions 1 to 229 are alpha N-terminal domain (alpha-NTD); that stretch reads MLQYQIDRIE…ELFQPLATVT (229 aa). The alpha C-terminal domain (alpha-CTD) stretch occupies residues 245–312; sequence QIPLEELNLS…ISIPQSRTSA (68 aa).

This sequence belongs to the RNA polymerase alpha chain family. As to quaternary structure, in cyanobacteria the RNAP catalytic core is composed of 2 alpha, 1 beta, 1 beta', 1 gamma and 1 omega subunit. When a sigma factor is associated with the core the holoenzyme is formed, which can initiate transcription.

The enzyme catalyses RNA(n) + a ribonucleoside 5'-triphosphate = RNA(n+1) + diphosphate. Functionally, DNA-dependent RNA polymerase catalyzes the transcription of DNA into RNA using the four ribonucleoside triphosphates as substrates. This Prochlorococcus marinus (strain MIT 9313) protein is DNA-directed RNA polymerase subunit alpha.